Consider the following 407-residue polypeptide: Protease ElaD (407 aa).

Histidine 231 is a catalytic residue. Cysteine 317 (nucleophile) is an active-site residue.

This sequence belongs to the peptidase C79 family.

Functionally, protease that can act as an efficient and specific deubiquitinating enzyme in vitro. Does not possess desumoylating and deneddylating activities. The physiological substrate is unknown. The sequence is that of Protease ElaD (elaD) from Escherichia coli O157:H7.